We begin with the raw amino-acid sequence, 281 residues long: Undecaprenyl-diphosphatase (281 aa).

7 helical membrane passes run 49-69 (SANT…AWIF), 92-112 (LHIF…DDFI), 116-136 (LFSV…MIAA), 152-172 (MTYK…WPGF), 196-216 (TFIM…ASNI), 224-244 (ILFY…SIRL), and 257-277 (FAIY…GFGI).

It belongs to the UppP family.

Its subcellular location is the cell membrane. The catalysed reaction is di-trans,octa-cis-undecaprenyl diphosphate + H2O = di-trans,octa-cis-undecaprenyl phosphate + phosphate + H(+). Its function is as follows. Catalyzes the dephosphorylation of undecaprenyl diphosphate (UPP). Confers resistance to bacitracin. The chain is Undecaprenyl-diphosphatase from Macrococcus caseolyticus (strain JCSC5402) (Macrococcoides caseolyticum).